The primary structure comprises 173 residues: Crossover junction endodeoxyribonuclease RuvC (173 aa).

Active-site residues include aspartate 8, glutamate 69, and aspartate 141. Mg(2+) is bound by residues aspartate 8, glutamate 69, and aspartate 141.

This sequence belongs to the RuvC family. Homodimer which binds Holliday junction (HJ) DNA. The HJ becomes 2-fold symmetrical on binding to RuvC with unstacked arms; it has a different conformation from HJ DNA in complex with RuvA. In the full resolvosome a probable DNA-RuvA(4)-RuvB(12)-RuvC(2) complex forms which resolves the HJ. Requires Mg(2+) as cofactor.

It is found in the cytoplasm. It carries out the reaction Endonucleolytic cleavage at a junction such as a reciprocal single-stranded crossover between two homologous DNA duplexes (Holliday junction).. The RuvA-RuvB-RuvC complex processes Holliday junction (HJ) DNA during genetic recombination and DNA repair. Endonuclease that resolves HJ intermediates. Cleaves cruciform DNA by making single-stranded nicks across the HJ at symmetrical positions within the homologous arms, yielding a 5'-phosphate and a 3'-hydroxyl group; requires a central core of homology in the junction. The consensus cleavage sequence is 5'-(A/T)TT(C/G)-3'. Cleavage occurs on the 3'-side of the TT dinucleotide at the point of strand exchange. HJ branch migration catalyzed by RuvA-RuvB allows RuvC to scan DNA until it finds its consensus sequence, where it cleaves and resolves the cruciform DNA. The chain is Crossover junction endodeoxyribonuclease RuvC from Stenotrophomonas maltophilia (strain R551-3).